The following is a 460-amino-acid chain: MELRLYDTLTKEKRTFVPLDANNVRMYVCGPTVYDFAHIGNARPVIVFDVLFRLLRHLYGEAHVKYVRNITDVDDKINDRAARDFPGLPLNEAIREVTEQTGKQFHADVDALGALRPSVEPRATEHIGEMREIIERLVAGGFAYVAEDHVLFSPQAMNAANSTLPRYGALSNRSLDEMVAGARVDVAPYKKGSTDFVLWKPSKPGEPSWPSPAGIAAQGRPGWHIECSAMAWKHLGEYFDIHGGGIDLVFPHHENEVAQTCCAFHRERMANYWMHNGFLQVESEKMSKSLGNFITIHELLADWPGEVLRLNMLKTHYRSPIDWTMKSLEESAKTLDDWYRVAADVDPGRPAASVVEPLLDDLNTSLAIAALHGLRNSDVSALAGSLRLLGFLSESAAQWEDRKQKASGVDAGEVERLISERTAARGRKDFKESDRIRDQLAAMGVAIKDSKEGTTWEFSR.

A Zn(2+)-binding site is contributed by C29. The 'HIGH' region motif lies at 31 to 41; it reads PTVYDFAHIGN. The Zn(2+) site is built by C227, H252, and E256. Residues 285 to 289 carry the 'KMSKS' region motif; sequence KMSKS. Residue K288 coordinates ATP.

It belongs to the class-I aminoacyl-tRNA synthetase family. In terms of assembly, monomer. The cofactor is Zn(2+).

Its subcellular location is the cytoplasm. It catalyses the reaction tRNA(Cys) + L-cysteine + ATP = L-cysteinyl-tRNA(Cys) + AMP + diphosphate. This is Cysteine--tRNA ligase from Bradyrhizobium diazoefficiens (strain JCM 10833 / BCRC 13528 / IAM 13628 / NBRC 14792 / USDA 110).